The following is a 345-amino-acid chain: Anthranilate phosphoribosyltransferase (345 aa).

Residues G84, 87–88 (GD), T92, 94–97 (NIST), 112–120 (KHGNRSVSS), and S124 each bind 5-phospho-alpha-D-ribose 1-diphosphate. Residue G84 coordinates anthranilate. S96 contacts Mg(2+). N115 lines the anthranilate pocket. R170 contributes to the anthranilate binding site. Mg(2+) is bound by residues D229 and E230.

It belongs to the anthranilate phosphoribosyltransferase family. In terms of assembly, homodimer. Mg(2+) is required as a cofactor.

It catalyses the reaction N-(5-phospho-beta-D-ribosyl)anthranilate + diphosphate = 5-phospho-alpha-D-ribose 1-diphosphate + anthranilate. The protein operates within amino-acid biosynthesis; L-tryptophan biosynthesis; L-tryptophan from chorismate: step 2/5. In terms of biological role, catalyzes the transfer of the phosphoribosyl group of 5-phosphorylribose-1-pyrophosphate (PRPP) to anthranilate to yield N-(5'-phosphoribosyl)-anthranilate (PRA). The protein is Anthranilate phosphoribosyltransferase of Xanthomonas oryzae pv. oryzae (strain MAFF 311018).